The primary structure comprises 365 residues: Peptide chain release factor 2 (365 aa).

Position 252 is an N5-methylglutamine (Gln252).

The protein belongs to the prokaryotic/mitochondrial release factor family. In terms of processing, methylated by PrmC. Methylation increases the termination efficiency of RF2.

The protein resides in the cytoplasm. Its function is as follows. Peptide chain release factor 2 directs the termination of translation in response to the peptide chain termination codons UGA and UAA. This Escherichia coli (strain K12 / MC4100 / BW2952) protein is Peptide chain release factor 2.